We begin with the raw amino-acid sequence, 426 residues long: Serine--tRNA ligase (426 aa).

233–235 (TAE) contributes to the L-serine binding site. ATP is bound at residue 264–266 (RSE). Residue glutamate 287 coordinates L-serine. 351 to 354 (EISS) contributes to the ATP binding site. L-serine is bound at residue serine 387.

Belongs to the class-II aminoacyl-tRNA synthetase family. Type-1 seryl-tRNA synthetase subfamily. In terms of assembly, homodimer. The tRNA molecule binds across the dimer.

The protein resides in the cytoplasm. It catalyses the reaction tRNA(Ser) + L-serine + ATP = L-seryl-tRNA(Ser) + AMP + diphosphate + H(+). The catalysed reaction is tRNA(Sec) + L-serine + ATP = L-seryl-tRNA(Sec) + AMP + diphosphate + H(+). It functions in the pathway aminoacyl-tRNA biosynthesis; selenocysteinyl-tRNA(Sec) biosynthesis; L-seryl-tRNA(Sec) from L-serine and tRNA(Sec): step 1/1. Catalyzes the attachment of serine to tRNA(Ser). Is also able to aminoacylate tRNA(Sec) with serine, to form the misacylated tRNA L-seryl-tRNA(Sec), which will be further converted into selenocysteinyl-tRNA(Sec). This Clostridium botulinum (strain Okra / Type B1) protein is Serine--tRNA ligase.